The sequence spans 837 residues: Anaphase-promoting complex subunit 2 (837 aa).

Phosphoserine is present on residues Ser-233, Ser-329, Ser-485, Ser-549, and Ser-712. The tract at residues 478–508 (CLETGQDSEDDSGEPEDWVPDPVDADPVKSS) is disordered. Residues 483 to 496 (QDSEDDSGEPEDWV) show a composition bias toward acidic residues. Tyr-825 bears the Phosphotyrosine mark.

It belongs to the cullin family. In terms of assembly, the mammalian APC/C is composed at least of 14 distinct subunits ANAPC1, ANAPC2, CDC27/APC3, ANAPC4, ANAPC5, CDC16/APC6, ANAPC7, CDC23/APC8, ANAPC10, ANAPC11, CDC26/APC12, ANAPC13, ANAPC15 and ANAPC16 that assemble into a complex of at least 19 chains with a combined molecular mass of around 1.2 MDa; APC/C interacts with FZR1 and FBXO5. In the context of the APC/C complex, directly interacts with UBE2C and UBE2S. Interacts (via cullin domain) with ANAPC11 and with UBCH10. Interacts with NEUROD2. Interacts with FBXO43; the interaction is direct.

It participates in protein modification; protein ubiquitination. In terms of biological role, together with the RING-H2 protein ANAPC11, constitutes the catalytic component of the anaphase promoting complex/cyclosome (APC/C), a cell cycle-regulated E3 ubiquitin ligase that controls progression through mitosis and the G1 phase of the cell cycle. The APC/C complex acts by mediating ubiquitination and subsequent degradation of target proteins: it mainly mediates the formation of 'Lys-11'-linked polyubiquitin chains and, to a lower extent, the formation of 'Lys-48'- and 'Lys-63'-linked polyubiquitin chains. The APC/C complex catalyzes assembly of branched 'Lys-11'-/'Lys-48'-linked branched ubiquitin chains on target proteins. The CDC20-APC/C complex positively regulates the formation of synaptic vesicle clustering at active zone to the presynaptic membrane in postmitotic neurons. CDC20-APC/C-induced degradation of NEUROD2 drives presynaptic differentiation. This Mus musculus (Mouse) protein is Anaphase-promoting complex subunit 2 (Anapc2).